The primary structure comprises 601 residues: Glutamyl-tRNA(Gln) amidotransferase subunit B, mitochondrial (601 aa).

The transit peptide at 1 to 52 directs the protein to the mitochondrion; it reads MLQQWLRQSPGAARFLRGSCCRGPQSGSLRHSPLPTAPHRCIRSLQTSATES.

The protein belongs to the GatB/GatE family. GatB subfamily. In terms of assembly, subunit of the heterotrimeric GatCAB amidotransferase (AdT) complex, composed of A, B and C subunits.

Its subcellular location is the mitochondrion. It carries out the reaction L-glutamyl-tRNA(Gln) + L-glutamine + ATP + H2O = L-glutaminyl-tRNA(Gln) + L-glutamate + ADP + phosphate + H(+). In terms of biological role, allows the formation of correctly charged Gln-tRNA(Gln) through the transamidation of misacylated Glu-tRNA(Gln) in the mitochondria. The reaction takes place in the presence of glutamine and ATP through an activated gamma-phospho-Glu-tRNA(Gln). The polypeptide is Glutamyl-tRNA(Gln) amidotransferase subunit B, mitochondrial (Neosartorya fischeri (strain ATCC 1020 / DSM 3700 / CBS 544.65 / FGSC A1164 / JCM 1740 / NRRL 181 / WB 181) (Aspergillus fischerianus)).